Reading from the N-terminus, the 538-residue chain is MSKIIEYDETARRAIEAGVNTLADAVRVTLGPRGRHVVLAKAFGGPAVTNDGVTVAREIDLEDPFENLGAQLVKSVATKTNDVAGDGTTTATVLAQALVKGGLRLVAAGANPIELGAGISKAADAVSEALLASATPVSGKDAIAQVATVSSRDQVLGELVGEAMTKVGVDGVVSVEESSTLNTELEFTEGVGFDKGFLSAYFVTDFDAQQAVLDDPVILLHQEKISSLPDLLPMLEKVAESGKPLLIIAEDIEGEALATLVVNSIRKTLKAVAVKAPFFGDRRKAFLEDLAIVTGGQVINPDTGLLLREVGTEVLGSARRVVVSKDDTIIVDGGGAKDAVANRIKQLRAEIEKTDSDWDREKLQERLAKLAGGVAVIKVGAATETALKERKESVEDAVAAAKAAVEEGIVAGGGSALLQARKALDELRGSLSGDQALGVDVFAEALGAPLYWIASNAGLDGAVAVHKVAELPAGHGLNAEKLSYGDLIADGVIDPVKVTRSAVLNSASVARMVLTTETAVVDKPAEEADDHGHGHHHH.

ATP contacts are provided by residues 29–32, 86–90, G413, and D494; these read TLGP and DGTTT.

It belongs to the chaperonin (HSP60) family. In terms of assembly, forms a cylinder of 14 subunits composed of two heptameric rings stacked back-to-back. Interacts with the co-chaperonin GroES.

The protein resides in the cytoplasm. The enzyme catalyses ATP + H2O + a folded polypeptide = ADP + phosphate + an unfolded polypeptide.. Its function is as follows. Together with its co-chaperonin GroES, plays an essential role in assisting protein folding. The GroEL-GroES system forms a nano-cage that allows encapsulation of the non-native substrate proteins and provides a physical environment optimized to promote and accelerate protein folding. The polypeptide is Chaperonin GroEL 1 (Mycolicibacterium paratuberculosis (strain ATCC BAA-968 / K-10) (Mycobacterium paratuberculosis)).